Here is a 222-residue protein sequence, read N- to C-terminus: Large ribosomal subunit protein uL4 (222 aa).

It belongs to the universal ribosomal protein uL4 family. As to quaternary structure, part of the 50S ribosomal subunit.

Its function is as follows. One of the primary rRNA binding proteins, this protein initially binds near the 5'-end of the 23S rRNA. It is important during the early stages of 50S assembly. It makes multiple contacts with different domains of the 23S rRNA in the assembled 50S subunit and ribosome. Functionally, forms part of the polypeptide exit tunnel. This Acidobacterium capsulatum (strain ATCC 51196 / DSM 11244 / BCRC 80197 / JCM 7670 / NBRC 15755 / NCIMB 13165 / 161) protein is Large ribosomal subunit protein uL4.